The primary structure comprises 147 residues: Small ribosomal subunit protein uS12 (147 aa).

Belongs to the universal ribosomal protein uS12 family. As to quaternary structure, part of the 30S ribosomal subunit.

With S4 and S5 plays an important role in translational accuracy. Located at the interface of the 30S and 50S subunits. The chain is Small ribosomal subunit protein uS12 from Hyperthermus butylicus (strain DSM 5456 / JCM 9403 / PLM1-5).